A 223-amino-acid polypeptide reads, in one-letter code: Ethylene-inducing xylanase 1 (223 aa).

The N-terminal stretch at 1–19 (MVSFTSLLAAFSVVSGVLT) is a signal peptide. Residues 34-223 (KRTPSSTGTS…SSGSATMTVS (190 aa)) form the GH11 domain. Catalysis depends on Glu119, which acts as the Nucleophile. The nuclear localization signal stretch occupies residues 174 to 184 (RRTKRTSGSVN). The active-site Proton donor is Glu210.

Belongs to the glycosyl hydrolase 11 (cellulase G) family.

It localises to the secreted. Its subcellular location is the host nucleus. It carries out the reaction Endohydrolysis of (1-&gt;4)-beta-D-xylosidic linkages in xylans.. It functions in the pathway glycan degradation; xylan degradation. Functionally, endo-1,4-beta-xylanase involved in the hydrolysis of xylan, a major structural heterogeneous polysaccharide found in plant biomass representing the second most abundant polysaccharide in the biosphere, after cellulose. Acts as an effector that localizes to the host nucleus to contribute to the virulence process. Induces host innate immunity responses; triggers BAK1-and SOBIR1-dependent cell death, salicylic acid signaling and jasmonic acid signaling. Does not exhibit any cell death when transiently expressed in N.benthamiana. This is Ethylene-inducing xylanase 1 from Verticillium dahliae (strain VdLs.17 / ATCC MYA-4575 / FGSC 10137) (Verticillium wilt).